The chain runs to 155 residues: Gene 27 protein (155 aa).

Positions 41–114 (KAKTQGMNVP…KAPENPNLPN (74 aa)) are disordered. Basic and acidic residues-rich tracts occupy residues 55–68 (KKPE…EKPT) and 78–95 (TAKE…ETKA).

Functionally, required for late gene transcription and DNA replication. In Bacillus subtilis (Bacteriophage SP01), this protein is Gene 27 protein (27).